Here is a 285-residue protein sequence, read N- to C-terminus: Eukaryotic translation initiation factor 3 subunit F-2 (285 aa).

The MPN domain maps to 11 to 145 (VFLKPLVLFQ…TRLYCAVEMG (135 aa)).

This sequence belongs to the eIF-3 subunit F family. Component of the eukaryotic translation initiation factor 3 (eIF-3) complex. The eIF-3 complex interacts with pix.

It localises to the cytoplasm. Functionally, component of the eukaryotic translation initiation factor 3 (eIF-3) complex, which is involved in protein synthesis of a specialized repertoire of mRNAs and, together with other initiation factors, stimulates binding of mRNA and methionyl-tRNAi to the 40S ribosome. The eIF-3 complex specifically targets and initiates translation of a subset of mRNAs involved in cell proliferation. The polypeptide is Eukaryotic translation initiation factor 3 subunit F-2 (Drosophila sechellia (Fruit fly)).